A 231-amino-acid chain; its full sequence is Flagellar L-ring protein (231 aa).

Positions 1–18 (MNRLLSVFALGGAVLLAG) are cleaved as a signal peptide. Cysteine 19 carries the N-palmitoyl cysteine lipid modification. Cysteine 19 carries S-diacylglycerol cysteine lipidation.

This sequence belongs to the FlgH family. The basal body constitutes a major portion of the flagellar organelle and consists of four rings (L,P,S, and M) mounted on a central rod.

The protein localises to the cell outer membrane. The protein resides in the bacterial flagellum basal body. Its function is as follows. Assembles around the rod to form the L-ring and probably protects the motor/basal body from shearing forces during rotation. This chain is Flagellar L-ring protein, found in Pseudomonas putida (strain GB-1).